An 896-amino-acid polypeptide reads, in one-letter code: DNA mismatch repair protein MutS (896 aa).

599-606 (GPNMAGKS) provides a ligand contact to ATP.

Belongs to the DNA mismatch repair MutS family.

In terms of biological role, this protein is involved in the repair of mismatches in DNA. It is possible that it carries out the mismatch recognition step. This protein has a weak ATPase activity. This chain is DNA mismatch repair protein MutS, found in Geobacillus kaustophilus (strain HTA426).